A 248-amino-acid polypeptide reads, in one-letter code: Ribosomal RNA small subunit methyltransferase J (248 aa).

S-adenosyl-L-methionine contacts are provided by residues 98-99, 114-115, 150-151, and D168; these read RD, ER, and SS.

The protein belongs to the methyltransferase superfamily. RsmJ family.

It is found in the cytoplasm. The enzyme catalyses guanosine(1516) in 16S rRNA + S-adenosyl-L-methionine = N(2)-methylguanosine(1516) in 16S rRNA + S-adenosyl-L-homocysteine + H(+). Specifically methylates the guanosine in position 1516 of 16S rRNA. This chain is Ribosomal RNA small subunit methyltransferase J, found in Shewanella denitrificans (strain OS217 / ATCC BAA-1090 / DSM 15013).